The chain runs to 650 residues: Fructose-1,6-bisphosphatase class 3 (650 aa).

It belongs to the FBPase class 3 family. Mn(2+) is required as a cofactor.

The enzyme catalyses beta-D-fructose 1,6-bisphosphate + H2O = beta-D-fructose 6-phosphate + phosphate. It participates in carbohydrate biosynthesis; gluconeogenesis. The polypeptide is Fructose-1,6-bisphosphatase class 3 (Staphylococcus xylosus).